The following is a 518-amino-acid chain: Membrane-bound lytic murein transglycosylase F (518 aa).

The signal sequence occupies residues 1-21 (MKKLKINYLFIGILALLLAVA). A non-LT domain region spans residues 22–269 (LWPSIPWFGK…RIEEKYLGHG (248 aa)). Positions 270–518 (DDFDYVDTRT…SRKGSEEKQN (249 aa)) are LT domain. Glu314 is an active-site residue.

In the N-terminal section; belongs to the bacterial solute-binding protein 3 family. The protein in the C-terminal section; belongs to the transglycosylase Slt family.

The protein localises to the cell outer membrane. The catalysed reaction is Exolytic cleavage of the (1-&gt;4)-beta-glycosidic linkage between N-acetylmuramic acid (MurNAc) and N-acetylglucosamine (GlcNAc) residues in peptidoglycan, from either the reducing or the non-reducing ends of the peptidoglycan chains, with concomitant formation of a 1,6-anhydrobond in the MurNAc residue.. Its function is as follows. Murein-degrading enzyme that degrades murein glycan strands and insoluble, high-molecular weight murein sacculi, with the concomitant formation of a 1,6-anhydromuramoyl product. Lytic transglycosylases (LTs) play an integral role in the metabolism of the peptidoglycan (PG) sacculus. Their lytic action creates space within the PG sacculus to allow for its expansion as well as for the insertion of various structures such as secretion systems and flagella. The polypeptide is Membrane-bound lytic murein transglycosylase F (Escherichia coli (strain SMS-3-5 / SECEC)).